We begin with the raw amino-acid sequence, 415 residues long: Thylakoid ADP,ATP carrier protein, chloroplastic (415 aa).

The transit peptide at 1-61 (MGEEKSLLQF…NFASLSVAIR (61 aa)) directs the protein to the chloroplast. Transmembrane regions (helical) follow at residues 106–126 (IALL…AFAG), 182–207 (LPQV…KLFR), 219–239 (LGAG…LDVL), 273–293 (GPSL…FDLV), and 309–329 (LLTA…LDTI). Solcar repeat units lie at residues 113–205 (PKDA…YKKL), 213–296 (LSVL…VKKS), and 307–387 (SSLL…VKKL). Arg-187 contributes to the ADP binding site. Arg-330 lines the ADP pocket. Residues 362–388 (GFVPNALKSMPNSSIKLTTFDIVKKLI) traverse the membrane as a helical segment.

Belongs to the mitochondrial carrier (TC 2.A.29) family. As to expression, highly expressed in developing photosynthetic organs such as leaves, flower buds and green siliques. Also detected in roots, flowers, mature leaves and stems.

It localises to the plastid. The protein resides in the chloroplast thylakoid membrane. The protein localises to the chloroplast envelope. Its activity is regulated as follows. KM and Vmax values toward ATP only are increased by m-chlorocarbonyl cyanide phenylhydrazone (CCCP). The corresponding values for ADP are not affected. Functionally, specifically transports adenine nucleotides. Involved in the uptake of ATP into thylakoids in exchange for lumenal ADP. The protein is Thylakoid ADP,ATP carrier protein, chloroplastic (TAAC) of Arabidopsis thaliana (Mouse-ear cress).